An 859-amino-acid polypeptide reads, in one-letter code: Homeobox-leucine zipper protein HOX32 (859 aa).

The interval 7 to 31 (AAVHGVGRQDRSSPGGGGAPQVDTG) is disordered. The homeobox DNA-binding region spans 29–92 (DTGKYVRYTP…NRRCREKQRK (64 aa)). A coiled-coil region spans residues 100–129 (VNRKLTAMNKLLMEENDRLQKQVSRLVYEN). Polar residues predominate over residues 146–164 (TSCESVVTSGQHHQQQNPA). The interval 146 to 172 (TSCESVVTSGQHHQQQNPAATRPQRDA) is disordered. Residues 171-393 (DANNPAGLLA…LRHIRQIAHE (223 aa)) enclose the START domain.

Belongs to the HD-ZIP homeobox family. Class III subfamily. As to expression, expressed in seedlings, roots, stems, leaf sheaths and blades and panicles.

The protein resides in the nucleus. Functionally, probable transcription factor. The protein is Homeobox-leucine zipper protein HOX32 (HOX32) of Oryza sativa subsp. indica (Rice).